A 221-amino-acid chain; its full sequence is MFQRFTSLFFNTPAPPEDSNCPGAFVSEEDEVDGWLIIDLQDSYTAPPDPGASPAPAGRPPPAPSLMDESWFVTPPACFTAEGPGLGPARLQSNPLEDLLIEHPSMSVYVTGSTIVLESGPPSPHPEAALPDQDLSDGELAPALREPRALHHAAAPMPARAVLLEKAGQVRRLQRARQRAERHTLSAKVLQRQNRARESRSRRPKHQGSFIYQPCQRQFNY.

The LIR motif lies at 26–41 (VSEEDEVDGWLIIDLQ). A disordered region spans residues 41-68 (QDSYTAPPDPGASPAPAGRPPPAPSLMD). The segment covering 47 to 64 (PPDPGASPAPAGRPPPAP) has biased composition (pro residues). At Ser136 the chain carries Phosphoserine. The disordered stretch occupies residues 177–210 (RQRAERHTLSAKVLQRQNRARESRSRRPKHQGSF).

In terms of assembly, interacts with VMP1, GABARAP, GABARAPL1, GABARAPL2, MAP1LC3A, MAP1LC3B, MAP1LC3C and THRA.

It is found in the cytoplasm. It localises to the cytosol. The protein resides in the nucleus. Its subcellular location is the PML body. The protein localises to the cytoplasmic vesicle. It is found in the autophagosome. Dual regulator of transcription and autophagy. Positively regulates autophagy and is required for autophagosome formation and processing. May act as a scaffold protein that recruits MAP1LC3A, GABARAP and GABARAPL2 and brings them to the autophagosome membrane by interacting with VMP1 where, in cooperation with the BECN1-PI3-kinase class III complex, they trigger autophagosome development. Acts as a transcriptional activator of THRA. This Mus musculus (Mouse) protein is Tumor protein p53-inducible nuclear protein 2 (Tp53inp2).